The primary structure comprises 254 residues: Pectate lyase E (254 aa).

Positions 1-17 (MYQPLLLLPLLLTSAFA) are cleaved as a signal peptide. The tract at residues 227-254 (TNNNSKEPKKKSSGPSSYCKYSEPLSKC) is disordered. Asn-229 carries an N-linked (GlcNAc...) asparagine glycan. Residues 239-254 (SGPSSYCKYSEPLSKC) are compositionally biased toward low complexity.

It belongs to the polysaccharide lyase 3 family. Requires Ca(2+) as cofactor.

Its subcellular location is the secreted. It catalyses the reaction Eliminative cleavage of (1-&gt;4)-alpha-D-galacturonan to give oligosaccharides with 4-deoxy-alpha-D-galact-4-enuronosyl groups at their non-reducing ends.. Pectinolytic enzyme consist of four classes of enzymes: pectin lyase, polygalacturonase, pectin methylesterase and rhamnogalacturonase. Among pectinolytic enzymes, pectin lyase is the most important in depolymerization of pectin, since it cleaves internal glycosidic bonds of highly methylated pectins. Favors pectate, the anion, over pectin, the methyl ester. This chain is Pectate lyase E (plyE), found in Emericella nidulans (strain FGSC A4 / ATCC 38163 / CBS 112.46 / NRRL 194 / M139) (Aspergillus nidulans).